Reading from the N-terminus, the 339-residue chain is Uroporphyrinogen decarboxylase (339 aa).

Residues 23–27 (RQAGR), D72, Y147, S202, and H315 each bind substrate.

The protein belongs to the uroporphyrinogen decarboxylase family. As to quaternary structure, homodimer.

Its subcellular location is the cytoplasm. It carries out the reaction uroporphyrinogen III + 4 H(+) = coproporphyrinogen III + 4 CO2. Its pathway is porphyrin-containing compound metabolism; protoporphyrin-IX biosynthesis; coproporphyrinogen-III from 5-aminolevulinate: step 4/4. Its function is as follows. Catalyzes the decarboxylation of four acetate groups of uroporphyrinogen-III to yield coproporphyrinogen-III. This Desulfotalea psychrophila (strain LSv54 / DSM 12343) protein is Uroporphyrinogen decarboxylase.